Here is a 532-residue protein sequence, read N- to C-terminus: Intercellular adhesion molecule 1 (532 aa).

Residues 1 to 27 (MAPSSPRPALPALLVLLGALFPGPGNA) form the signal peptide. At 28–480 (QTSVSPPKVI…TVNVLSPRYE (453 aa)) the chain is on the extracellular side. Ig-like C2-type domains are found at residues 41–103 (GGSV…QSTA) and 128–193 (GKDL…LDLR). 3 cysteine pairs are disulfide-bonded: Cys48–Cys92, Cys52–Cys96, and Cys135–Cys186. Asn145 is a glycosylation site (N-linked (GlcNAc...) asparagine). Positions 152–154 (RGE) match the Cell attachment site; atypical motif. N-linked (GlcNAc...) asparagine glycosylation is found at Asn183, Asn202, Asn267, and Asn296. 2 consecutive Ig-like C2-type domains span residues 230-297 (DTQG…LGNQ) and 325-378 (GTEV…LEVA). The cysteines at positions 237 and 290 are disulfide-linked. An intrachain disulfide couples Cys332 to Cys371. Residues Asn385 and Asn406 are each glycosylated (N-linked (GlcNAc...) asparagine). 3 disulfide bridges follow: Cys403/Cys419, Cys419/Cys457, and Cys431/Cys457. The Ig-like C2-type 5 domain maps to 412–464 (NSQQTPMCQASGNPLPELKCLKDGTFPLPVGESVTVTRDLEGTYLCRARSTQG). The chain crosses the membrane as a helical span at residues 481 to 503 (IVIITVVAAAVIMGTAGLSTYLY). Residues 504–532 (NRQRKIRKYRLQQAQKGTPMKPNTQATPP) lie on the Cytoplasmic side of the membrane. Thr521 and Thr530 each carry phosphothreonine.

Belongs to the immunoglobulin superfamily. ICAM family. In terms of assembly, homodimer. Interacts with MUC1 and promotes cell aggregation in epithelial cells. Interacts with ARHGEF26/SGEF. Interacts (on T cell side) with CD81, CD247 and CD9 at immunological synapses between antigen-presenting cells and T cells. Monoubiquitinated, which is promoted by MARCH9 and leads to endocytosis.

Its subcellular location is the membrane. In terms of biological role, ICAM proteins are ligands for the leukocyte adhesion protein LFA-1 (integrin alpha-L/beta-2). During leukocyte trans-endothelial migration, ICAM1 engagement promotes the assembly of endothelial apical cups through ARHGEF26/SGEF and RHOG activation. This Pan troglodytes (Chimpanzee) protein is Intercellular adhesion molecule 1 (ICAM1).